The primary structure comprises 213 residues: Adenylyl-sulfate kinase (213 aa).

A compositionally biased stretch (basic and acidic residues) spans 1–17 (MPAHQLDDHNQETRSDD). The tract at residues 1–20 (MPAHQLDDHNQETRSDDENI) is disordered. ATP is bound at residue 47-54 (GLSGSGKS). The active-site Phosphoserine intermediate is the Ser-121.

The protein belongs to the APS kinase family.

The enzyme catalyses adenosine 5'-phosphosulfate + ATP = 3'-phosphoadenylyl sulfate + ADP + H(+). It participates in sulfur metabolism; hydrogen sulfide biosynthesis; sulfite from sulfate: step 2/3. Functionally, catalyzes the synthesis of activated sulfate. This chain is Adenylyl-sulfate kinase, found in Yersinia pestis.